A 20-amino-acid chain; its full sequence is Pregnancy-associated glycoprotein 55h (20 aa).

N4 carries N-linked (GlcNAc...) asparagine glycosylation.

Belongs to the peptidase A1 family. As to expression, highly expressed in the placenta between day 60 and day 100 of gestation.

Its subcellular location is the secreted. It localises to the extracellular space. The chain is Pregnancy-associated glycoprotein 55h from Ovis aries (Sheep).